A 305-amino-acid chain; its full sequence is Large ribosomal subunit protein uL10 (305 aa).

This sequence belongs to the universal ribosomal protein uL10 family. P0 forms a pentameric complex by interaction with dimers of P1 and P2. Phosphorylated.

In terms of biological role, ribosomal protein P0 is the functional equivalent of E.coli protein L10. This Dictyostelium discoideum (Social amoeba) protein is Large ribosomal subunit protein uL10 (rplp0).